Here is a 690-residue protein sequence, read N- to C-terminus: Elongation factor G (690 aa).

The region spanning Glu-8–Leu-283 is the tr-type G domain. GTP contacts are provided by residues Ala-17 to Thr-24, Asp-81 to His-85, and Asn-135 to Asp-138.

This sequence belongs to the TRAFAC class translation factor GTPase superfamily. Classic translation factor GTPase family. EF-G/EF-2 subfamily.

The protein localises to the cytoplasm. Functionally, catalyzes the GTP-dependent ribosomal translocation step during translation elongation. During this step, the ribosome changes from the pre-translocational (PRE) to the post-translocational (POST) state as the newly formed A-site-bound peptidyl-tRNA and P-site-bound deacylated tRNA move to the P and E sites, respectively. Catalyzes the coordinated movement of the two tRNA molecules, the mRNA and conformational changes in the ribosome. The polypeptide is Elongation factor G (Nitrobacter winogradskyi (strain ATCC 25391 / DSM 10237 / CIP 104748 / NCIMB 11846 / Nb-255)).